A 334-amino-acid chain; its full sequence is uncharacterized protein (334 aa).

Transmembrane regions (helical) follow at residues 1-21 (MFRLLLICITFLALYFGFTFI) and 46-66 (ILGLLLLVSCFIIIRFLIIII).

The protein localises to the cell membrane. This is an uncharacterized protein from Rickettsia prowazekii (strain Madrid E).